Consider the following 183-residue polypeptide: Ribosome-recycling factor (183 aa).

It belongs to the RRF family.

Its subcellular location is the cytoplasm. Responsible for the release of ribosomes from messenger RNA at the termination of protein biosynthesis. May increase the efficiency of translation by recycling ribosomes from one round of translation to another. This is Ribosome-recycling factor from Mycoplasma mobile (strain ATCC 43663 / 163K / NCTC 11711) (Mesomycoplasma mobile).